The chain runs to 61 residues: uncharacterized protein (61 aa).

A coiled-coil region spans residues 34 to 61; the sequence is TDVEDIDRLISMLDDLEAKYERFKKDWE.

This is an uncharacterized protein from Bacillus subtilis (strain 168).